A 573-amino-acid polypeptide reads, in one-letter code: Developmental and secondary metabolism regulator VEL1 (573 aa).

The region spanning 26–220 (NRHLWYQLTV…ADQGCRVRIR (195 aa)) is the Velvet domain. The short motif at 40–45 (ERARAC) is the Nuclear localization signal element. The disordered stretch occupies residues 222–520 (DVRMRKRDGK…STGGKRKHDH (299 aa)). The segment covering 230-245 (GKGSGFDRRGEEEYSR) has biased composition (basic and acidic residues). 2 stretches are compositionally biased toward pro residues: residues 291–310 (APPP…PPAA) and 341–351 (APIPPATPTGP). Positions 352-363 (YPTSSAAPSPYA) are enriched in low complexity. Positions 379-389 (PPAPSASPAPP) are enriched in pro residues. The span at 432–448 (TPASQPTYSTPASQPTY) shows a compositional bias: polar residues. A compositionally biased stretch (pro residues) spans 458 to 475 (SAPPPAPYSAPAPPPPRP). Positions 476–504 (SMSQSSLAPLKIASLVSPLPPIEAQTEPL) are PEST.

Belongs to the velvet family. VeA subfamily. Component of the heterotrimeric velvet complex composed of LAE1, VEL1 and VEL2; VEL1 acting as a bridging protein between LAE1 and VEL2. Interacts with LAE1.

It is found in the nucleus. The protein localises to the cytoplasm. In terms of biological role, component of the velvet transcription factor complex that controls sexual/asexual developmental ratio in response to light, promoting sexual development in the darkness while stimulating asexual sporulation under illumination. The velvet complex hat acts as a global regulator for secondary metabolite gene expression. Regulates expression of the carbohydrate-active enzyme gene clusters. The sequence is that of Developmental and secondary metabolism regulator VEL1 from Hypocrea jecorina (strain QM6a) (Trichoderma reesei).